The following is a 339-amino-acid chain: Holliday junction branch migration complex subunit RuvB (339 aa).

The large ATPase domain (RuvB-L) stretch occupies residues 2–187 (KDVNEEERII…FGIIEHMQYY (186 aa)). Residues Leu-26, Arg-27, Gly-68, Lys-71, Thr-72, Thr-73, 134-136 (EDF), Arg-177, Tyr-187, and Arg-224 contribute to the ATP site. Thr-72 serves as a coordination point for Mg(2+). Residues 188–258 (SVEDLEKIIQ…TTKHSLHLLE (71 aa)) form a small ATPAse domain (RuvB-S) region. Residues 261–339 (DEGLDQTDRK…QLGYPPKDEK (79 aa)) form a head domain (RuvB-H) region. DNA is bound by residues Arg-316 and Arg-321.

It belongs to the RuvB family. Homohexamer. Forms an RuvA(8)-RuvB(12)-Holliday junction (HJ) complex. HJ DNA is sandwiched between 2 RuvA tetramers; dsDNA enters through RuvA and exits via RuvB. An RuvB hexamer assembles on each DNA strand where it exits the tetramer. Each RuvB hexamer is contacted by two RuvA subunits (via domain III) on 2 adjacent RuvB subunits; this complex drives branch migration. In the full resolvosome a probable DNA-RuvA(4)-RuvB(12)-RuvC(2) complex forms which resolves the HJ.

It localises to the cytoplasm. It carries out the reaction ATP + H2O = ADP + phosphate + H(+). In terms of biological role, the RuvA-RuvB-RuvC complex processes Holliday junction (HJ) DNA during genetic recombination and DNA repair, while the RuvA-RuvB complex plays an important role in the rescue of blocked DNA replication forks via replication fork reversal (RFR). RuvA specifically binds to HJ cruciform DNA, conferring on it an open structure. The RuvB hexamer acts as an ATP-dependent pump, pulling dsDNA into and through the RuvAB complex. RuvB forms 2 homohexamers on either side of HJ DNA bound by 1 or 2 RuvA tetramers; 4 subunits per hexamer contact DNA at a time. Coordinated motions by a converter formed by DNA-disengaged RuvB subunits stimulates ATP hydrolysis and nucleotide exchange. Immobilization of the converter enables RuvB to convert the ATP-contained energy into a lever motion, pulling 2 nucleotides of DNA out of the RuvA tetramer per ATP hydrolyzed, thus driving DNA branch migration. The RuvB motors rotate together with the DNA substrate, which together with the progressing nucleotide cycle form the mechanistic basis for DNA recombination by continuous HJ branch migration. Branch migration allows RuvC to scan DNA until it finds its consensus sequence, where it cleaves and resolves cruciform DNA. The sequence is that of Holliday junction branch migration complex subunit RuvB from Lactobacillus johnsonii (strain CNCM I-12250 / La1 / NCC 533).